A 442-amino-acid polypeptide reads, in one-letter code: tRNA modification GTPase MnmE (442 aa).

Arg-27, Glu-84, and Lys-124 together coordinate (6S)-5-formyl-5,6,7,8-tetrahydrofolate. Residues 221-366 (GLHVVIVGAP…LLDALQAFAE (146 aa)) form the TrmE-type G domain. GTP-binding positions include 231-236 (NAGKSS), 250-256 (SKEAGTT), and 275-278 (DTAG). The Mg(2+) site is built by Ser-235 and Thr-256. Lys-442 contacts (6S)-5-formyl-5,6,7,8-tetrahydrofolate.

It belongs to the TRAFAC class TrmE-Era-EngA-EngB-Septin-like GTPase superfamily. TrmE GTPase family. In terms of assembly, homodimer. Heterotetramer of two MnmE and two MnmG subunits. K(+) serves as cofactor.

It localises to the cytoplasm. Exhibits a very high intrinsic GTPase hydrolysis rate. Involved in the addition of a carboxymethylaminomethyl (cmnm) group at the wobble position (U34) of certain tRNAs, forming tRNA-cmnm(5)s(2)U34. In Brucella suis biovar 1 (strain 1330), this protein is tRNA modification GTPase MnmE.